Consider the following 296-residue polypeptide: MGTIVLKMTAEQISVLQKDLASYATATKNPYAFFSAKVDGTSVIAYTSGKVTFQGAKPEILASRFGYQAEPKQSPDGQNLALIGSDEVGNGSYFGGLAVVASLVTPADHAFLKSLGVDDSKNLNDSKIRQIAPLLEEKIPHKALLLSPRKYNEVVGDGKAHNAVSVKVALHNQAIFLLLQSGAKPDKIVIDAFISEKNYQKYLKNERNHFEFPITLEEKAEGKYLAVAVSSIIARNLFLENLDKLSQEVGYTLPSGAGAKSDQVAAKLLQAYGDQALQTTAKYHFANTKKAYQRLK.

The 217-residue stretch at 80 to 296 (LALIGSDEVG…NTKKAYQRLK (217 aa)) folds into the RNase H type-2 domain. A divalent metal cation-binding residues include aspartate 86, glutamate 87, and aspartate 191.

The protein belongs to the RNase HII family. RnhC subfamily. Mn(2+) is required as a cofactor. The cofactor is Mg(2+).

It is found in the cytoplasm. It carries out the reaction Endonucleolytic cleavage to 5'-phosphomonoester.. Its function is as follows. Endonuclease that specifically degrades the RNA of RNA-DNA hybrids. This is Ribonuclease HIII from Streptococcus thermophilus (strain ATCC BAA-491 / LMD-9).